Consider the following 484-residue polypeptide: Protein nucleotidyltransferase YdiU (484 aa).

ATP is bound by residues G81, G83, R84, K103, D115, G116, R166, and R173. Residue D244 is the Proton acceptor of the active site. Residues N245 and D254 each coordinate Mg(2+). Residue D254 coordinates ATP.

The protein belongs to the SELO family. Requires Mg(2+) as cofactor. Mn(2+) serves as cofactor.

It catalyses the reaction L-seryl-[protein] + ATP = 3-O-(5'-adenylyl)-L-seryl-[protein] + diphosphate. It carries out the reaction L-threonyl-[protein] + ATP = 3-O-(5'-adenylyl)-L-threonyl-[protein] + diphosphate. The enzyme catalyses L-tyrosyl-[protein] + ATP = O-(5'-adenylyl)-L-tyrosyl-[protein] + diphosphate. The catalysed reaction is L-histidyl-[protein] + UTP = N(tele)-(5'-uridylyl)-L-histidyl-[protein] + diphosphate. It catalyses the reaction L-seryl-[protein] + UTP = O-(5'-uridylyl)-L-seryl-[protein] + diphosphate. It carries out the reaction L-tyrosyl-[protein] + UTP = O-(5'-uridylyl)-L-tyrosyl-[protein] + diphosphate. Functionally, nucleotidyltransferase involved in the post-translational modification of proteins. It can catalyze the addition of adenosine monophosphate (AMP) or uridine monophosphate (UMP) to a protein, resulting in modifications known as AMPylation and UMPylation. This Shewanella baltica (strain OS185) protein is Protein nucleotidyltransferase YdiU.